Consider the following 150-residue polypeptide: D-aminoacyl-tRNA deacylase (150 aa).

Residues 138–139 (GP) carry the Gly-cisPro motif, important for rejection of L-amino acids motif.

The protein belongs to the DTD family. Homodimer.

The protein resides in the cytoplasm. The catalysed reaction is glycyl-tRNA(Ala) + H2O = tRNA(Ala) + glycine + H(+). It carries out the reaction a D-aminoacyl-tRNA + H2O = a tRNA + a D-alpha-amino acid + H(+). Its function is as follows. An aminoacyl-tRNA editing enzyme that deacylates mischarged D-aminoacyl-tRNAs. Also deacylates mischarged glycyl-tRNA(Ala), protecting cells against glycine mischarging by AlaRS. Acts via tRNA-based rather than protein-based catalysis; rejects L-amino acids rather than detecting D-amino acids in the active site. By recycling D-aminoacyl-tRNA to D-amino acids and free tRNA molecules, this enzyme counteracts the toxicity associated with the formation of D-aminoacyl-tRNA entities in vivo and helps enforce protein L-homochirality. The sequence is that of D-aminoacyl-tRNA deacylase from Azobacteroides pseudotrichonymphae genomovar. CFP2.